An 832-amino-acid chain; its full sequence is Protein P (832 aa).

The interval 1–177 (MPLSYQHFRR…FCGSPYSWEQ (177 aa)) is terminal protein domain (TP). The spacer stretch occupies residues 178-335 (ELQHGAESFH…YCLSHIVNLL (158 aa)). The interval 186-229 (FHQQSSGILSRPPVGSSLQSKHSKSRLGLQSQQGHLARRQQGRS) is disordered. The interval 336 to 679 (EDWGPCAEHG…YLNLYPVARQ (344 aa)) is polymerase/reverse transcriptase domain (RT). Residues 346–589 (EHHIRTPRTP…YSLNFMGYVI (244 aa)) enclose the Reverse transcriptase domain. Positions 418, 540, and 541 each coordinate Mg(2+).

Belongs to the hepadnaviridae P protein family.

It catalyses the reaction DNA(n) + a 2'-deoxyribonucleoside 5'-triphosphate = DNA(n+1) + diphosphate. The enzyme catalyses Endonucleolytic cleavage to 5'-phosphomonoester.. Its activity is regulated as follows. Activated by host HSP70 and HSP40 in vitro to be able to bind the epsilon loop of the pgRNA. Because deletion of the RNase H region renders the protein partly chaperone-independent, the chaperones may be needed indirectly to relieve occlusion of the RNA-binding site by this domain. Inhibited by several reverse-transcriptase inhibitors: Lamivudine, Adefovir and Entecavir. In terms of biological role, multifunctional enzyme that converts the viral RNA genome into dsDNA in viral cytoplasmic capsids. This enzyme displays a DNA polymerase activity that can copy either DNA or RNA templates, and a ribonuclease H (RNase H) activity that cleaves the RNA strand of RNA-DNA heteroduplexes in a partially processive 3'- to 5'-endonucleasic mode. Neo-synthesized pregenomic RNA (pgRNA) are encapsidated together with the P protein, and reverse-transcribed inside the nucleocapsid. Initiation of reverse-transcription occurs first by binding the epsilon loop on the pgRNA genome, and is initiated by protein priming, thereby the 5'-end of (-)DNA is covalently linked to P protein. Partial (+)DNA is synthesized from the (-)DNA template and generates the relaxed circular DNA (RC-DNA) genome. After budding and infection, the RC-DNA migrates in the nucleus, and is converted into a plasmid-like covalently closed circular DNA (cccDNA). The activity of P protein does not seem to be necessary for cccDNA generation, and is presumably released from (+)DNA by host nuclear DNA repair machinery. In Hepatitis B virus genotype D (isolate Germany/1-91/1991) (HBV-D), this protein is Protein P.